A 782-amino-acid polypeptide reads, in one-letter code: Endonuclease MutS2 (782 aa).

An ATP-binding site is contributed by 336–343; sequence GPNTGGKT. One can recognise a Smr domain in the interval 707 to 782; it reads LDLRGYRYED…GFGVTVATLK (76 aa).

The protein belongs to the DNA mismatch repair MutS family. MutS2 subfamily. As to quaternary structure, homodimer. Binds to stalled ribosomes, contacting rRNA.

Functionally, endonuclease that is involved in the suppression of homologous recombination and thus may have a key role in the control of bacterial genetic diversity. Its function is as follows. Acts as a ribosome collision sensor, splitting the ribosome into its 2 subunits. Detects stalled/collided 70S ribosomes which it binds and splits by an ATP-hydrolysis driven conformational change. Acts upstream of the ribosome quality control system (RQC), a ribosome-associated complex that mediates the extraction of incompletely synthesized nascent chains from stalled ribosomes and their subsequent degradation. Probably generates substrates for RQC. This Staphylococcus aureus (strain COL) protein is Endonuclease MutS2.